The chain runs to 79 residues: Succinate dehydrogenase assembly factor 1, mitochondrial (79 aa).

It belongs to the complex I LYR family. SDHAF1 subfamily. As to quaternary structure, interacts with sdh2 within an sdh1-sdh2 subcomplex.

It is found in the mitochondrion matrix. Plays an essential role in the assembly of succinate dehydrogenase (SDH), an enzyme complex (also referred to as respiratory complex II) that is a component of both the tricarboxylic acid (TCA) cycle and the mitochondrial electron transport chain, and which couples the oxidation of succinate to fumarate with the reduction of ubiquinone (coenzyme Q) to ubiquinol. Promotes maturation of the iron-sulfur protein subunit sdh2 of the SDH catalytic dimer, protecting it from the deleterious effects of oxidants. May act together with SDHAF3. This is Succinate dehydrogenase assembly factor 1, mitochondrial from Schizosaccharomyces pombe (strain 972 / ATCC 24843) (Fission yeast).